We begin with the raw amino-acid sequence, 184 residues long: ATP synthase subunit b, chloroplastic (184 aa).

Residues 27–49 form a helical membrane-spanning segment; that stretch reads LATNPINLSVVLGVLIFFGKGVL.

It belongs to the ATPase B chain family. F-type ATPases have 2 components, F(1) - the catalytic core - and F(0) - the membrane proton channel. F(1) has five subunits: alpha(3), beta(3), gamma(1), delta(1), epsilon(1). F(0) has four main subunits: a(1), b(1), b'(1) and c(10-14). The alpha and beta chains form an alternating ring which encloses part of the gamma chain. F(1) is attached to F(0) by a central stalk formed by the gamma and epsilon chains, while a peripheral stalk is formed by the delta, b and b' chains.

Its subcellular location is the plastid. The protein localises to the chloroplast thylakoid membrane. Functionally, f(1)F(0) ATP synthase produces ATP from ADP in the presence of a proton or sodium gradient. F-type ATPases consist of two structural domains, F(1) containing the extramembraneous catalytic core and F(0) containing the membrane proton channel, linked together by a central stalk and a peripheral stalk. During catalysis, ATP synthesis in the catalytic domain of F(1) is coupled via a rotary mechanism of the central stalk subunits to proton translocation. In terms of biological role, component of the F(0) channel, it forms part of the peripheral stalk, linking F(1) to F(0). In Solanum bulbocastanum (Wild potato), this protein is ATP synthase subunit b, chloroplastic.